The sequence spans 1349 residues: Patatin-like phospholipase domain-containing protein 7 (1349 aa).

Residues 1 to 36 are Lumenal-facing; the sequence is MQKEEDVCPEAGYCLGTALSSWGLHFMEEHSQSTML. The helical transmembrane segment at 37–57 threads the bilayer; the sequence is MGIGIGVLLTLAFVGLAAFFV. Residues 58–1349 are Cytoplasmic-facing; that stretch reads YRKVSRFRRA…DQGPRLYRPS (1292 aa). A nucleoside 3',5'-cyclic phosphate is bound at residue 170-297; the sequence is VLGHFEKPLF…VRVVQIIMVR (128 aa). A disordered region spans residues 340-361; that stretch reads MSYGPEEQLERSPRLSEFNSSD. A phosphoserine mark is found at Ser-341 and Ser-377. A nucleoside 3',5'-cyclic phosphate contacts are provided by residues 496-599 and 610-715; these read FLHV…VVRR and ALDW…LGEK. The involved in the binding to lipid droplets stretch occupies residues 678–964; the sequence is VHAVRDSELA…RGCAQVGILR (287 aa). Positions 947–1113 constitute a PNPLA domain; it reads LVLGGGGARG…INNLPADVAR (167 aa). The GXGXXG motif lies at 951-956; the sequence is GGGARG. Residues 978-982 carry the GXSXG motif; it reads GTSIG. Ser-980 (nucleophile) is an active-site residue. Asp-1100 (proton acceptor) is an active-site residue. The short motif at 1100 to 1102 is the DGA/G element; it reads DGG. The residue at position 1277 (Ser-1277) is a Phosphoserine. Phosphothreonine is present on Thr-1281. The disordered stretch occupies residues 1297–1349; sequence DFQSTGIELDSDSECEPSMSQGPHSLTSPKQSQDSFPWLPNQDDQGPRLYRPS. Residues 1314-1331 are compositionally biased toward polar residues; it reads SMSQGPHSLTSPKQSQDS.

Belongs to the NTE family. As to expression, expressed in the brain, liver, kidney, lung and testis.

The protein resides in the endoplasmic reticulum membrane. Its subcellular location is the lipid droplet. The catalysed reaction is a 1-acyl-sn-glycero-3-phosphocholine + H2O = sn-glycerol 3-phosphocholine + a fatty acid + H(+). The enzyme catalyses 1-(9Z-octadecenoyl)-sn-glycero-3-phosphocholine + H2O = sn-glycerol 3-phosphocholine + (9Z)-octadecenoate + H(+). It catalyses the reaction 1-(9Z-octadecenoyl)-sn-glycero-3-phosphoethanolamine + H2O = sn-glycero-3-phosphoethanolamine + (9Z)-octadecenoate + H(+). It carries out the reaction 1-(9Z-octadecenoyl)-sn-glycero-3-phospho-L-serine + H2O = sn-glycero-3-phospho-L-serine + (9Z)-octadecenoate + H(+). The catalysed reaction is 1-hexadecanoyl-sn-glycero-3-phosphocholine + H2O = sn-glycerol 3-phosphocholine + hexadecanoate + H(+). The enzyme catalyses 1-hexadecanoyl-sn-glycero-3-phosphate + H2O = sn-glycerol 3-phosphate + hexadecanoate + H(+). In terms of biological role, lysophospholipase which preferentially deacylates unsaturated lysophosphatidylcholine (C18:1), generating glycerophosphocholine. Also can deacylate, to a lesser extent, lysophosphatidylethanolamine (C18:1), lysophosphatidyl-L-serine (C18:1) and lysophosphatidic acid (C16:0). In Rattus norvegicus (Rat), this protein is Patatin-like phospholipase domain-containing protein 7 (Pnpla7).